A 143-amino-acid chain; its full sequence is Lutropin subunit beta (143 aa).

An N-terminal signal peptide occupies residues 1 to 22 (MEMLQGLLLLWLLLLNVGGVWT). Intrachain disulfides connect Cys-31–Cys-79, Cys-45–Cys-94, Cys-48–Cys-132, Cys-56–Cys-110, Cys-60–Cys-112, and Cys-115–Cys-122. Residue Asn-35 is glycosylated (N-linked (GlcNAc...) asparagine).

Belongs to the glycoprotein hormones subunit beta family. As to quaternary structure, heterodimer of a common alpha chain and a unique beta chain which confers biological specificity to thyrotropin, lutropin, follitropin and gonadotropin.

The protein localises to the secreted. In terms of biological role, promotes spermatogenesis and ovulation by stimulating the testes and ovaries to synthesize steroids. This is Lutropin subunit beta (LHB) from Felis catus (Cat).